Consider the following 309-residue polypeptide: Glutaminase (309 aa).

Substrate is bound by residues serine 64, asparagine 114, glutamate 160, asparagine 167, tyrosine 191, tyrosine 243, and valine 261.

This sequence belongs to the glutaminase family. Homotetramer.

It carries out the reaction L-glutamine + H2O = L-glutamate + NH4(+). This Rhizobium rhizogenes (strain K84 / ATCC BAA-868) (Agrobacterium radiobacter) protein is Glutaminase.